A 188-amino-acid polypeptide reads, in one-letter code: Elongation factor P (188 aa).

It belongs to the elongation factor P family.

Its subcellular location is the cytoplasm. It functions in the pathway protein biosynthesis; polypeptide chain elongation. Functionally, involved in peptide bond synthesis. Stimulates efficient translation and peptide-bond synthesis on native or reconstituted 70S ribosomes in vitro. Probably functions indirectly by altering the affinity of the ribosome for aminoacyl-tRNA, thus increasing their reactivity as acceptors for peptidyl transferase. The sequence is that of Elongation factor P from Rickettsia typhi (strain ATCC VR-144 / Wilmington).